The following is a 754-amino-acid chain: 5-methyltetrahydropteroyltriglutamate--homocysteine methyltransferase (754 aa).

5-methyltetrahydropteroyltri-L-glutamate-binding positions include 15-18 (RELK) and lysine 114. L-homocysteine is bound by residues 430 to 432 (IGS) and glutamate 483. L-methionine-binding positions include 430-432 (IGS) and glutamate 483. 5-methyltetrahydropteroyltri-L-glutamate contacts are provided by residues 514 to 515 (RC) and tryptophan 560. Aspartate 598 is an L-homocysteine binding site. An L-methionine-binding site is contributed by aspartate 598. Glutamate 604 lines the 5-methyltetrahydropteroyltri-L-glutamate pocket. Histidine 641, cysteine 643, and glutamate 665 together coordinate Zn(2+). The Proton donor role is filled by histidine 694. Residue cysteine 726 participates in Zn(2+) binding.

Belongs to the vitamin-B12 independent methionine synthase family. Zn(2+) serves as cofactor.

It catalyses the reaction 5-methyltetrahydropteroyltri-L-glutamate + L-homocysteine = tetrahydropteroyltri-L-glutamate + L-methionine. It functions in the pathway amino-acid biosynthesis; L-methionine biosynthesis via de novo pathway; L-methionine from L-homocysteine (MetE route): step 1/1. Its function is as follows. Catalyzes the transfer of a methyl group from 5-methyltetrahydrofolate to homocysteine resulting in methionine formation. The sequence is that of 5-methyltetrahydropteroyltriglutamate--homocysteine methyltransferase from Campylobacter jejuni (strain RM1221).